We begin with the raw amino-acid sequence, 139 residues long: Cofilin (139 aa).

Residues 4–135 enclose the ADF-H domain; sequence GVKVSQECLD…SYDTVLDKVS (132 aa).

Belongs to the actin-binding proteins ADF family.

Its subcellular location is the cytoplasm. The protein resides in the cytoskeleton. It is found in the nucleus matrix. In terms of biological role, controls reversibly actin polymerization and depolymerization in a pH-sensitive manner. It has the ability to bind G- and F-actin in a 1:1 ratio of cofilin to actin. Binding to F-actin is regulated by tropomyosin. It is the major component of intranuclear and cytoplasmic actin rods. Required for accumulation of actin at the cell division site via depolymerizing actin at the cell ends. In association with myosin II has a role in the assembly of the contractile ring via severing actin filaments. Involved in the maintenance of the contractile ring once formed. In association with profilin and capping protein, has a role in the mitotic reorganization of the actin cytoskeleton. The chain is Cofilin (COF1) from Mycosarcoma maydis (Corn smut fungus).